The primary structure comprises 208 residues: Probable GTP-binding protein EngB (208 aa).

Positions 23–205 constitute an EngB-type G domain; sequence LTSEMVILGR…RQTLLKYLLT (183 aa). GTP is bound by residues 31–38, 57–61, 84–87, 154–157, and 182–184; these read GRSNVGKS, GKTRL, DLPG, TKFD, and FNA. S38 and T59 together coordinate Mg(2+).

The protein belongs to the TRAFAC class TrmE-Era-EngA-EngB-Septin-like GTPase superfamily. EngB GTPase family. Mg(2+) serves as cofactor.

In terms of biological role, necessary for normal cell division and for the maintenance of normal septation. The protein is Probable GTP-binding protein EngB of Helicobacter pylori (strain Shi470).